Reading from the N-terminus, the 180-residue chain is Inner membrane-spanning protein YciB (180 aa).

The next 5 helical transmembrane spans lie at Ile22–Phe42, Met50–Ser70, Leu72–Ser92, Met121–Leu141, and Phe149–Ile169.

Belongs to the YciB family.

The protein localises to the cell inner membrane. Its function is as follows. Plays a role in cell envelope biogenesis, maintenance of cell envelope integrity and membrane homeostasis. This Yersinia enterocolitica serotype O:8 / biotype 1B (strain NCTC 13174 / 8081) protein is Inner membrane-spanning protein YciB.